We begin with the raw amino-acid sequence, 332 residues long: o-succinylbenzoate synthase (332 aa).

Lysine 135 acts as the Proton donor in catalysis. Mg(2+)-binding residues include aspartate 163, glutamate 192, and aspartate 215. The Proton acceptor role is filled by lysine 241.

Belongs to the mandelate racemase/muconate lactonizing enzyme family. MenC type 1 subfamily. A divalent metal cation is required as a cofactor.

The catalysed reaction is (1R,6R)-6-hydroxy-2-succinyl-cyclohexa-2,4-diene-1-carboxylate = 2-succinylbenzoate + H2O. It functions in the pathway quinol/quinone metabolism; 1,4-dihydroxy-2-naphthoate biosynthesis; 1,4-dihydroxy-2-naphthoate from chorismate: step 4/7. The protein operates within quinol/quinone metabolism; menaquinone biosynthesis. In terms of biological role, converts 2-succinyl-6-hydroxy-2,4-cyclohexadiene-1-carboxylate (SHCHC) to 2-succinylbenzoate (OSB). This chain is o-succinylbenzoate synthase, found in Vibrio cholerae serotype O1 (strain ATCC 39315 / El Tor Inaba N16961).